The primary structure comprises 285 residues: Hydroxyethylthiazole kinase (285 aa).

Substrate is bound at residue Met43. Positions 119 and 172 each coordinate ATP. Position 199 (Gly199) interacts with substrate.

The protein belongs to the Thz kinase family. It depends on Mg(2+) as a cofactor.

The enzyme catalyses 5-(2-hydroxyethyl)-4-methylthiazole + ATP = 4-methyl-5-(2-phosphooxyethyl)-thiazole + ADP + H(+). The protein operates within cofactor biosynthesis; thiamine diphosphate biosynthesis; 4-methyl-5-(2-phosphoethyl)-thiazole from 5-(2-hydroxyethyl)-4-methylthiazole: step 1/1. Its function is as follows. Catalyzes the phosphorylation of the hydroxyl group of 4-methyl-5-beta-hydroxyethylthiazole (THZ). The chain is Hydroxyethylthiazole kinase from Desulfovibrio desulfuricans (strain ATCC 27774 / DSM 6949 / MB).